The following is a 204-amino-acid chain: Large ribosomal subunit protein eL15 (204 aa).

The protein belongs to the eukaryotic ribosomal protein eL15 family. As to quaternary structure, component of the large ribosomal subunit.

It localises to the cytoplasm. Its function is as follows. Component of the large ribosomal subunit. The ribosome is a large ribonucleoprotein complex responsible for the synthesis of proteins in the cell. The protein is Large ribosomal subunit protein eL15 (rpl15) of Hypophthalmichthys molitrix (Silver carp).